A 679-amino-acid chain; its full sequence is Glycine--tRNA ligase beta subunit (679 aa).

This sequence belongs to the class-II aminoacyl-tRNA synthetase family. In terms of assembly, tetramer of two alpha and two beta subunits.

The protein resides in the cytoplasm. The catalysed reaction is tRNA(Gly) + glycine + ATP = glycyl-tRNA(Gly) + AMP + diphosphate. The polypeptide is Glycine--tRNA ligase beta subunit (Streptococcus pyogenes serotype M12 (strain MGAS9429)).